The following is a 295-amino-acid chain: Protoheme IX farnesyltransferase (295 aa).

9 helical membrane passes run 27-47, 48-68, 94-114, 117-137, 144-164, 171-191, 216-236, 241-261, and 272-292; these read LVVF…HPFL, ALIS…INMW, SALE…AIAV, ISAA…TIWL, NIVI…AVVT, SFIL…ALSL, KHIL…ALFL, FYLS…ISVI, and MFSY…FCSI.

It belongs to the UbiA prenyltransferase family. Protoheme IX farnesyltransferase subfamily.

Its subcellular location is the cell membrane. It catalyses the reaction heme b + (2E,6E)-farnesyl diphosphate + H2O = Fe(II)-heme o + diphosphate. Its pathway is porphyrin-containing compound metabolism; heme O biosynthesis; heme O from protoheme: step 1/1. Functionally, converts heme B (protoheme IX) to heme O by substitution of the vinyl group on carbon 2 of heme B porphyrin ring with a hydroxyethyl farnesyl side group. The protein is Protoheme IX farnesyltransferase of Wolbachia pipientis subsp. Culex pipiens (strain wPip).